The chain runs to 729 residues: Fatty acid oxidation complex subunit alpha (729 aa).

The tract at residues 1-189 (MLYKGDTLYL…KIGLVDGVVK (189 aa)) is enoyl-CoA hydratase/isomerase. Residue D296 coordinates substrate. The segment at 311–729 (ETPKQAAVLG…ARPVGSLKTA (419 aa)) is 3-hydroxyacyl-CoA dehydrogenase. NAD(+)-binding positions include M324, D343, 400-402 (VVE), K407, and S429. H450 serves as the catalytic For 3-hydroxyacyl-CoA dehydrogenase activity. Residue N453 participates in NAD(+) binding. Substrate-binding residues include N500 and Y660. The interval 708–729 (RHNEPYYPPVEPARPVGSLKTA) is disordered.

In the N-terminal section; belongs to the enoyl-CoA hydratase/isomerase family. It in the C-terminal section; belongs to the 3-hydroxyacyl-CoA dehydrogenase family. Heterotetramer of two alpha chains (FadB) and two beta chains (FadA).

It catalyses the reaction a (3S)-3-hydroxyacyl-CoA + NAD(+) = a 3-oxoacyl-CoA + NADH + H(+). It carries out the reaction a (3S)-3-hydroxyacyl-CoA = a (2E)-enoyl-CoA + H2O. The enzyme catalyses a 4-saturated-(3S)-3-hydroxyacyl-CoA = a (3E)-enoyl-CoA + H2O. The catalysed reaction is (3S)-3-hydroxybutanoyl-CoA = (3R)-3-hydroxybutanoyl-CoA. It catalyses the reaction a (3Z)-enoyl-CoA = a 4-saturated (2E)-enoyl-CoA. It carries out the reaction a (3E)-enoyl-CoA = a 4-saturated (2E)-enoyl-CoA. It functions in the pathway lipid metabolism; fatty acid beta-oxidation. Functionally, involved in the aerobic and anaerobic degradation of long-chain fatty acids via beta-oxidation cycle. Catalyzes the formation of 3-oxoacyl-CoA from enoyl-CoA via L-3-hydroxyacyl-CoA. It can also use D-3-hydroxyacyl-CoA and cis-3-enoyl-CoA as substrate. This is Fatty acid oxidation complex subunit alpha from Salmonella gallinarum (strain 287/91 / NCTC 13346).